Consider the following 334-residue polypeptide: N-chimaerin (334 aa).

Positions 1-10 (MPSKESWSGR) are enriched in polar residues. The interval 1-22 (MPSKESWSGRKTNRATVHKSKQ) is disordered. At threonine 67 the chain carries Phosphothreonine. A Phorbol-ester/DAG-type zinc finger spans residues 80-130 (VHNFKVHTFRGPHWCEYCANFMWGLIAQGVKCADCGLNVHKQCSKMVPNDC). Residues 143 to 334 (CDLTTLVKAR…LLIKNEDILF (192 aa)) form the Rho-GAP domain. Phosphothreonine is present on threonine 215.

As to quaternary structure, interacts with EPHA4; effector of EPHA4 in axon guidance linking EPHA4 activation to RAC1 regulation. In terms of processing, phosphorylated. Phosphorylation is EPHA4 kinase activity-dependent.

In terms of biological role, GTPase-activating protein for p21-rac and a phorbol ester receptor. Involved in the assembly of neuronal locomotor circuits as a direct effector of EPHA4 in axon guidance. The chain is N-chimaerin (CHN1) from Bos taurus (Bovine).